A 400-amino-acid polypeptide reads, in one-letter code: Subtilisin-like protease 7 (400 aa).

The N-terminal stretch at 1-20 is a signal peptide; it reads MGFITKAIPLALAAASVING. Positions 21-119 are excised as a propeptide; that stretch reads AEILETRAGV…IERDARVQIN (99 aa). The Inhibitor I9 domain occupies 36-118; the sequence is KYIVVMNDGM…YIERDARVQI (83 aa). The 272-residue stretch at 129 to 400 folds into the Peptidase S8 domain; that stretch reads SWGLARVGSK…GKLINNGSGK (272 aa). Catalysis depends on charge relay system residues aspartate 161 and histidine 192. An N-linked (GlcNAc...) asparagine glycan is attached at asparagine 252. Serine 346 serves as the catalytic Charge relay system. The N-linked (GlcNAc...) asparagine glycan is linked to asparagine 396.

It belongs to the peptidase S8 family.

The protein resides in the secreted. Its function is as follows. Secreted subtilisin-like serine protease with keratinolytic activity that contributes to pathogenicity. In Arthroderma gypseum (strain ATCC MYA-4604 / CBS 118893) (Microsporum gypseum), this protein is Subtilisin-like protease 7 (SUB7).